We begin with the raw amino-acid sequence, 598 residues long: Glutamine--fructose-6-phosphate aminotransferase [isomerizing] (598 aa).

The active-site Nucleophile; for GATase activity is Cys2. One can recognise a Glutamine amidotransferase type-2 domain in the interval 2 to 219 (CGIIGYIGPR…DGEYGIVSKD (218 aa)). 2 consecutive SIS domains span residues 280–420 (VAEL…LVGI) and 449–588 (IAVK…PDRP). The active-site For Fru-6P isomerization activity is the Lys593.

Homodimer.

It localises to the cytoplasm. The enzyme catalyses D-fructose 6-phosphate + L-glutamine = D-glucosamine 6-phosphate + L-glutamate. In terms of biological role, catalyzes the first step in hexosamine metabolism, converting fructose-6P into glucosamine-6P using glutamine as a nitrogen source. The protein is Glutamine--fructose-6-phosphate aminotransferase [isomerizing] of Pyrococcus horikoshii (strain ATCC 700860 / DSM 12428 / JCM 9974 / NBRC 100139 / OT-3).